The chain runs to 617 residues: Chaperone protein HscA homolog (617 aa).

Belongs to the heat shock protein 70 family.

Its function is as follows. Chaperone involved in the maturation of iron-sulfur cluster-containing proteins. Has a low intrinsic ATPase activity which is markedly stimulated by HscB. This is Chaperone protein HscA homolog from Vibrio campbellii (strain ATCC BAA-1116).